Here is a 162-residue protein sequence, read N- to C-terminus: AP-1 complex subunit sigma-2 (162 aa).

The protein belongs to the adaptor complexes small subunit family. In terms of assembly, adaptor protein complex 1 (AP-1) is a heterotetramer composed of two large adaptins (gamma-type subunit and beta-type subunit), a medium adaptin (mu-type subunit) and a small adaptin (sigma-type subunit). Expressed in roots, stems, leaves, flowers and siliques (developing fruits and seeds).

Its subcellular location is the golgi apparatus. It localises to the cytoplasmic vesicle. The protein resides in the clathrin-coated vesicle membrane. Subunit of clathrin-associated adaptor protein complex 1 that plays a role in protein sorting at the trans-Golgi network and early endosomes (TGN/EE). The AP complexes mediate the recruitment of clathrin to membranes and the recognition of sorting signals within the cytosolic tails of transmembrane cargo molecules. The sequence is that of AP-1 complex subunit sigma-2 (AAP19-2) from Arabidopsis thaliana (Mouse-ear cress).